Consider the following 180-residue polypeptide: Putative adenylate kinase (180 aa).

Residues Gly10, Gly12, Lys13, Thr14, and Thr15 each contribute to the ATP site. An NMP region spans residues 30 to 50 (NLRDFALEKGIGEVKGDELEV). Residues 99–109 (ERGYSKDKIGE) form an LID region. Positions 100 and 138 each coordinate ATP.

It belongs to the adenylate kinase family. AK6 subfamily. As to quaternary structure, interacts with uS11. Not a structural component of 40S pre-ribosomes, but transiently interacts with them by binding to uS11.

The catalysed reaction is AMP + ATP = 2 ADP. It carries out the reaction ATP + H2O = ADP + phosphate + H(+). In terms of biological role, broad-specificity nucleoside monophosphate (NMP) kinase that catalyzes the reversible transfer of the terminal phosphate group between nucleoside triphosphates and monophosphates. Also has ATPase activity. Involved in the late maturation steps of the 30S ribosomal particles, specifically 16S rRNA maturation. While NMP activity is not required for ribosome maturation, ATPase activity is. Associates transiently with small ribosomal subunit protein uS11. ATP hydrolysis breaks the interaction with uS11. May temporarily remove uS11 from the ribosome to enable a conformational change of the ribosomal RNA that is needed for the final maturation step of the small ribosomal subunit. This is Putative adenylate kinase from Pyrococcus furiosus (strain ATCC 43587 / DSM 3638 / JCM 8422 / Vc1).